Reading from the N-terminus, the 312-residue chain is UDP-N-acetylenolpyruvoylglucosamine reductase (312 aa).

The region spanning 33 to 199 is the FAD-binding PCMH-type domain; sequence RVGGKAEWYC…TGATLQLLPG (167 aa). Residue Arg-178 is part of the active site. Ser-229 serves as the catalytic Proton donor. The active site involves Glu-299.

This sequence belongs to the MurB family. The cofactor is FAD.

The protein localises to the cytoplasm. The enzyme catalyses UDP-N-acetyl-alpha-D-muramate + NADP(+) = UDP-N-acetyl-3-O-(1-carboxyvinyl)-alpha-D-glucosamine + NADPH + H(+). It participates in cell wall biogenesis; peptidoglycan biosynthesis. In terms of biological role, cell wall formation. This chain is UDP-N-acetylenolpyruvoylglucosamine reductase, found in Synechococcus sp. (strain JA-3-3Ab) (Cyanobacteria bacterium Yellowstone A-Prime).